Consider the following 703-residue polypeptide: Elongation factor G (703 aa).

Positions 7 to 287 constitute a tr-type G domain; the sequence is KFTRNIGIAA…AVMRYLPSPA (281 aa). GTP is bound by residues 16–23, 84–88, and 138–141; these read AHIDAGKT, DTPGH, and NKMD.

This sequence belongs to the TRAFAC class translation factor GTPase superfamily. Classic translation factor GTPase family. EF-G/EF-2 subfamily.

It is found in the cytoplasm. In terms of biological role, catalyzes the GTP-dependent ribosomal translocation step during translation elongation. During this step, the ribosome changes from the pre-translocational (PRE) to the post-translocational (POST) state as the newly formed A-site-bound peptidyl-tRNA and P-site-bound deacylated tRNA move to the P and E sites, respectively. Catalyzes the coordinated movement of the two tRNA molecules, the mRNA and conformational changes in the ribosome. In Christiangramia forsetii (strain DSM 17595 / CGMCC 1.15422 / KT0803) (Gramella forsetii), this protein is Elongation factor G.